The following is a 292-amino-acid chain: Large ribosomal subunit protein uL4 (292 aa).

Composition is skewed to basic and acidic residues over residues 1–33 (MVEV…DKTA) and 42–51 (KVSDKAESTP). Disordered regions lie at residues 1 to 59 (MVEV…VKTS) and 132 to 158 (GTHK…TGKA).

Belongs to the universal ribosomal protein uL4 family. As to quaternary structure, part of the 50S ribosomal subunit.

Functionally, one of the primary rRNA binding proteins, this protein initially binds near the 5'-end of the 23S rRNA. It is important during the early stages of 50S assembly. It makes multiple contacts with different domains of the 23S rRNA in the assembled 50S subunit and ribosome. In terms of biological role, forms part of the polypeptide exit tunnel. The polypeptide is Large ribosomal subunit protein uL4 (Mycoplasmopsis pulmonis (strain UAB CTIP) (Mycoplasma pulmonis)).